A 237-amino-acid polypeptide reads, in one-letter code: Protein PetR (237 aa).

The 114-residue stretch at 8–121 folds into the Response regulatory domain; sequence HLLIVDDDER…ELLLRINAIL (114 aa). A 4-aspartylphosphate modification is found at D57. Positions 77–95 form a DNA-binding region, H-T-H motif; sequence ATPILLLTARGETRERIEG. The segment at residues 132–236 is a DNA-binding region (ompR/PhoB-type); the sequence is PKYLSLGPLR…VRGLGYMLAP (105 aa).

In terms of biological role, necessary for photosynthetic and respiratory growth. Probable promoter-specific protein mediating the interaction between DNA and RNA polymerase. This chain is Protein PetR (petR), found in Rhodobacter capsulatus (strain ATCC BAA-309 / NBRC 16581 / SB1003).